We begin with the raw amino-acid sequence, 2253 residues long: Polycystin family receptor for egg jelly (2253 aa).

The first 19 residues, 1 to 19 (MRPGPALLLLGVGLSLSVG), serve as a signal peptide directing secretion. Residues 20–1184 (RLPLPPVPRG…NIIKSLHQNP (1165 aa)) are Extracellular-facing. Low complexity predominate over residues 154–169 (RPASPAARVSPRSAAP). Residues 154–177 (RPASPAARVSPRSAAPGPRPQQGF) are disordered. N-linked (GlcNAc...) asparagine glycosylation is found at Asn197, Asn242, Asn295, Asn306, Asn345, Asn349, Asn481, Asn674, Asn849, Asn890, Asn923, Asn939, Asn958, and Asn965. In terms of domain architecture, REJ spans 215–913 (CVIQRVRINT…STMFCDFTND (699 aa)). Residues 1185-1205 (VTLFTVLFIILLYVGLAFWAL) traverse the membrane as a helical segment. Residues 1206 to 1389 (YRDEMDQHLR…VAKTFNRLQR (184 aa)) lie on the Cytoplasmic side of the membrane. The 118-residue stretch at 1230–1347 (LCYLVTIFTG…TLDRTFHVTH (118 aa)) folds into the PLAT domain. A helical membrane pass occupies residues 1390-1410 (LSCCLAMLLSSLLCNIMFFNL). Over 1411–1427 (NRQEQTESRERKYMRSM) the chain is Extracellular. A helical membrane pass occupies residues 1428-1448 (MIGIESVLITIPVQLLITFLF). Residues 1449–1576 (TCSQRKPQAD…KPRIVLPWWC (128 aa)) are Cytoplasmic-facing. Residues 1494-1562 (PREVAKPASK…EQHPSQKDLQ (69 aa)) are disordered. Residues 1517–1527 (SKPKHRHRKAQ) are compositionally biased toward basic residues. The segment covering 1549-1558 (DVHSEQHPSQ) has biased composition (basic and acidic residues). A helical transmembrane segment spans residues 1577 to 1597 (VYVAWFLVFATSSISSFFIVF). Residues 1598–1607 (YGLTYGYDKS) lie on the Extracellular side of the membrane. The chain crosses the membrane as a helical span at residues 1608-1628 (IEWLFASFCSFCQSVLLVQPS). Residues 1629–1708 (KIILLSGFRT…RKKRIKRRAL (80 aa)) lie on the Cytoplasmic side of the membrane. The helical transmembrane segment at 1709–1729 (LFLSYILTHFIFLALLLILIV) threads the bilayer. The Extracellular segment spans residues 1730-1966 (LLRHTDCFYY…FDRKASAEIY (237 aa)). Asn1836, Asn1893, and Asn1944 each carry an N-linked (GlcNAc...) asparagine glycan. The chain crosses the membrane as a helical span at residues 1967–1987 (LYVAILIFFLAYVVDEGCIIM). The Cytoplasmic portion of the chain corresponds to 1988-1996 (QERASYVRS). A helical transmembrane segment spans residues 1997–2017 (VYNLLNFALKCIFTVLIVLFL). At 2018–2042 (RKHFLATGIIRFYLSNPEDFIPFHA) the chain is on the extracellular side. A helical transmembrane segment spans residues 2043-2063 (VSQVDHIMRIILGFLLFLTIL). Residues 2064–2091 (KTLRYSRFFYDVRLAQRAIQAALPGICH) are Cytoplasmic-facing. The chain crosses the membrane as a helical span at residues 2092-2112 (MAFVVSVYFFVYMAFGYLVFG). At 2113 to 2145 (QHEWNYSNLIHSTQTVFSYCVSAFQNTEFSNNR) the chain is on the extracellular side. A helical membrane pass occupies residues 2146-2166 (ILGVLFLSSFMLVMICVLINL). Residues 2167–2253 (FQAVILSAYE…NGKKMVYLVV (87 aa)) lie on the Cytoplasmic side of the membrane.

The protein belongs to the polycystin family. Exclusively expressed in testis.

The protein resides in the cell membrane. The protein localises to the cytoplasmic vesicle. Its subcellular location is the secretory vesicle. It is found in the acrosome membrane. It localises to the nucleus. Testis-specific protein that controls sperm transport and the timing of zona pellucida-evoked exocytosis of the sperm acrosome. The sequence is that of Polycystin family receptor for egg jelly from Homo sapiens (Human).